The primary structure comprises 350 residues: Ion-translocating oxidoreductase complex subunit D (350 aa).

The next 4 helical transmembrane spans lie at 20-40 (IMLL…WFFG), 42-62 (GTVL…AAIL), 89-109 (IPPL…VVIA), and 123-143 (PAMI…TSWL). Position 187 is an FMN phosphoryl threonine (T187). A run of 5 helical transmembrane segments spans residues 214-234 (VLAG…GLFL), 242-262 (WHIP…GWLF), 267-287 (LASP…FFIL), 301-321 (LIFG…GGYP), and 322-342 (DGVA…DYYT).

It belongs to the NqrB/RnfD family. The complex is composed of six subunits: RnfA, RnfB, RnfC, RnfD, RnfE and RnfG. The cofactor is FMN.

The protein localises to the cell inner membrane. In terms of biological role, part of a membrane-bound complex that couples electron transfer with translocation of ions across the membrane. This chain is Ion-translocating oxidoreductase complex subunit D, found in Klebsiella pneumoniae (strain 342).